Here is a 507-residue protein sequence, read N- to C-terminus: Proton-coupled zinc antiporter SLC30A1 (507 aa).

The Cytoplasmic portion of the chain corresponds to 1 to 10; it reads MGCWGRNRGR. Residues 11–31 traverse the membrane as a helical segment; it reads LLCMLLLTFMFMVLEVVVSRV. Topologically, residues 32–35 are extracellular; it reads TASL. A helical transmembrane segment spans residues 36–56; the sequence is AMLSDSFHMLSDVLALVVALV. Residues His43 and Asp47 each coordinate Zn(2+). Residues 57–78 lie on the Cytoplasmic side of the membrane; sequence AERFARRTHATQKNTFGWIRAE. A helical transmembrane segment spans residues 79–99; the sequence is VMGALVNAIFLTGLCFAILLE. The Extracellular segment spans residues 100-113; the sequence is AVERFIEPHEMQQP. The chain crosses the membrane as a helical span at residues 114–134; it reads LVVLSVGVAGLLVNVLGLCLF. The Cytoplasmic portion of the chain corresponds to 135–247; it reads HHHSGEGQGA…RAGQLNMRGV (113 aa). The disordered stretch occupies residues 140–218; it reads EGQGAGHGHS…EKLRSDDPVD (79 aa). The segment at 145–156 is 6 X 2 AA approximate repeats of H-G; it reads GHGHSHGHGHGH. Basic residues predominate over residues 147–165; sequence GHSHGHGHGHLAKGARKAG. Over residues 188–200 the composition is skewed to polar residues; sequence TNTLVANTSNSNG. The span at 204–215 shows a compositional bias: basic and acidic residues; the sequence is DQAEPEKLRSDD. The helical transmembrane segment at 248–268 threads the bilayer; it reads FLHVLGDALGSVIVVVNALVF. 2 residues coordinate Zn(2+): His250 and Asp254. At 269-307 the chain is on the extracellular side; it reads YFSWKGCTEDDFCVNPCFPDPCKSSVELMNSTQAPMHEA. An N-linked (GlcNAc...) asparagine glycan is attached at Asn298. Residues 308–328 form a helical membrane-spanning segment; sequence GPCWVLYLDPTLCIIMVCILL. Topologically, residues 329-507 are cytoplasmic; the sequence is YTTYPLLKES…VPNKQPESSL (179 aa). The residue at position 506 (Ser506) is a Phosphoserine.

The protein belongs to the cation diffusion facilitator (CDF) transporter (TC 2.A.4) family. SLC30A subfamily. Homodimer. Interacts with TMEM163. Interacts and forms a complex with TMC6 and TMC8; the interaction regulates zinc transport into the ER. As to expression, widely expressed. Detected in duodenum and jejunum but not in ileum and colon (at protein level). Expressed by neuroglial cells (at protein level).

Its subcellular location is the cell membrane. It localises to the basolateral cell membrane. It is found in the cytoplasmic vesicle membrane. The protein resides in the cytoplasm. The protein localises to the endoplasmic reticulum membrane. Its subcellular location is the golgi apparatus membrane. It localises to the nucleus membrane. The enzyme catalyses Zn(2+)(in) + 2 H(+)(out) = Zn(2+)(out) + 2 H(+)(in). Its activity is regulated as follows. Calcium-dependent. Zinc ion:proton antiporter that could function at the plasma membrane mediating zinc efflux from cells against its electrochemical gradient protecting them from intracellular zinc accumulation and toxicity. Alternatively, could prevent the transport to the plasma membrane of CACNB2, the L-type calcium channels regulatory subunit, through a yet to be defined mechanism. By modulating the expression of these channels at the plasma membrane, could prevent calcium and zinc influx into cells. By the same mechanism, could also prevent L-type calcium channels-mediated heavy metal influx into cells. In some cells, could also function as a zinc ion:proton antiporter mediating zinc entry into the lumen of cytoplasmic vesicles. In macrophages, can increase zinc ions concentration into the lumen of cytoplasmic vesicles containing engulfed bacteria and could help inactivate them. Forms a complex with TMC6/EVER1 and TMC8/EVER2 at the ER membrane of keratynocytes which facilitates zinc uptake into the ER. Down-regulates the activity of transcription factors induced by zinc and cytokines. The protein is Proton-coupled zinc antiporter SLC30A1 of Rattus norvegicus (Rat).